We begin with the raw amino-acid sequence, 232 residues long: Orotidine 5'-phosphate decarboxylase (232 aa).

Substrate contacts are provided by residues D11, K32, 59 to 68, T116, R178, Q188, G208, and R209; that span reads DLKLHDIPHT. The active-site Proton donor is the K61.

Belongs to the OMP decarboxylase family. Type 1 subfamily. As to quaternary structure, homodimer.

It carries out the reaction orotidine 5'-phosphate + H(+) = UMP + CO2. The protein operates within pyrimidine metabolism; UMP biosynthesis via de novo pathway; UMP from orotate: step 2/2. In terms of biological role, catalyzes the decarboxylation of orotidine 5'-monophosphate (OMP) to uridine 5'-monophosphate (UMP). This chain is Orotidine 5'-phosphate decarboxylase, found in Synechococcus sp. (strain JA-3-3Ab) (Cyanobacteria bacterium Yellowstone A-Prime).